Here is a 596-residue protein sequence, read N- to C-terminus: ATP-dependent lipid A-core flippase (596 aa).

The next 6 membrane-spanning stretches (helical) occupy residues V34–I54, A80–L100, A138–V158, V164–I184, Q263–V283, and V292–L312. Residues V38–R321 enclose the ABC transmembrane type-1 domain. Residues I353–I589 enclose the ABC transporter domain. ATP is bound at residue G389 to T396.

It belongs to the ABC transporter superfamily. Lipid exporter (TC 3.A.1.106) family. As to quaternary structure, homodimer.

It localises to the cell inner membrane. The catalysed reaction is ATP + H2O + lipid A-core oligosaccharideSide 1 = ADP + phosphate + lipid A-core oligosaccharideSide 2.. Its function is as follows. Involved in lipopolysaccharide (LPS) biosynthesis. Translocates lipid A-core from the inner to the outer leaflet of the inner membrane. Transmembrane domains (TMD) form a pore in the inner membrane and the ATP-binding domain (NBD) is responsible for energy generation. This is ATP-dependent lipid A-core flippase from Burkholderia thailandensis (strain ATCC 700388 / DSM 13276 / CCUG 48851 / CIP 106301 / E264).